The sequence spans 336 residues: MTDLNDNICKRYIKMITNIVILSLIICISLAFWIISMTASTYYGNLRPISPWRWLFSVVVPVLIVSNGLKKKSLDHSGALGGLVVGFILTIANFSFFTSLLMFFLSSSKLTKWKGEVKKRLDSEYKEGGQRNWVQVFCNGAVPTELALLYMIENGPGEIPVDFSKQYSASWMCLSLLAALACSAGDTWASEVGPVLSKSSPRLITTWEKVPVGTNGGVTVVGLVSSLLGGTFVGIAYFLTQLIFVNDLDISAPQWPIIAFGGLAGLLGSIVDSYLGATMQYTGLDESTGMVVNSPTNKARHIAGKPILDNNAVNLFSSVLIALLLPTAAWGFWPRG.

Transmembrane regions (helical) follow at residues 15–35 (MITNIVILSLIICISLAFWII), 49–69 (ISPWRWLFSVVVPVLIVSNGL), 84–104 (VVGFILTIANFSFFTSLLMFF), 218–238 (VTVVGLVSSLLGGTFVGIAYF), 257–277 (IIAFGGLAGLLGSIVDSYLGA), and 313–333 (VNLFSSVLIALLLPTAAWGFW).

It belongs to the TMEM19 family.

The protein resides in the membrane. The polypeptide is Transmembrane protein 19 (TMEM19) (Homo sapiens (Human)).